A 504-amino-acid polypeptide reads, in one-letter code: Histidine ammonia-lyase (504 aa).

The segment at residues 142 to 144 (ASG) is a cross-link (5-imidazolinone (Ala-Gly)). The residue at position 143 (serine 143) is a 2,3-didehydroalanine (Ser).

This sequence belongs to the PAL/histidase family. Contains an active site 4-methylidene-imidazol-5-one (MIO), which is formed autocatalytically by cyclization and dehydration of residues Ala-Ser-Gly.

It is found in the cytoplasm. It catalyses the reaction L-histidine = trans-urocanate + NH4(+). The protein operates within amino-acid degradation; L-histidine degradation into L-glutamate; N-formimidoyl-L-glutamate from L-histidine: step 1/3. The chain is Histidine ammonia-lyase from Staphylococcus aureus (strain JH1).